A 549-amino-acid chain; its full sequence is Chaperonin GroEL (549 aa).

ATP-binding positions include 29 to 32, Lys-50, 86 to 90, Gly-414, 477 to 479, and Asp-493; these read TLGP, DGTTT, and NAL.

This sequence belongs to the chaperonin (HSP60) family. In terms of assembly, forms a cylinder of 14 subunits composed of two heptameric rings stacked back-to-back. Interacts with the co-chaperonin GroES.

The protein localises to the cytoplasm. The enzyme catalyses ATP + H2O + a folded polypeptide = ADP + phosphate + an unfolded polypeptide.. Functionally, together with its co-chaperonin GroES, plays an essential role in assisting protein folding. The GroEL-GroES system forms a nano-cage that allows encapsulation of the non-native substrate proteins and provides a physical environment optimized to promote and accelerate protein folding. The polypeptide is Chaperonin GroEL (Leptospira biflexa serovar Patoc (strain Patoc 1 / Ames)).